The chain runs to 487 residues: Protein SMG9 (487 aa).

Disordered regions lie at residues 30–83 and 136–164; these read EDAA…PPAL and RDKGSCSGGAGTAGTSAGAPNALQELQPP. The segment covering 42–70 has biased composition (basic and acidic residues); the sequence is LKKDRDREQETWDRERDKDRKLERDREAE.

Belongs to the SMG9 family.

Its function is as follows. Involved in nonsense-mediated decay (NMD) of mRNAs containing premature stop codons. Probable component of kinase complex containing nonC and recruited to stalled ribosomes. The sequence is that of Protein SMG9 from Drosophila melanogaster (Fruit fly).